A 191-amino-acid polypeptide reads, in one-letter code: MPPEPLSLPLDLAPGLVDGDTFLSIMGALPTGVTVVTTLGPDGEPYGLTCSAACSVSKAPPLLLVCINRDSRVLKALLERGEFAVNVLRGGGESTSARFAAPVDDRFRDVRWEPGSAGGVPVMSADVVAHAECRVAAALDAGDHTIVIGAVVAGGPRPEVPSPLMYWRRSYARWPVEEDPRTAALTLAAEG.

46-52 (YGLTCSA) is a binding site for FAD. Residue Ser-55 participates in NAD(+) binding. 72–73 (RV) contacts FAD. NAD(+) contacts are provided by residues His-144 and 166 to 169 (YWRR).

The protein belongs to the non-flavoprotein flavin reductase family.

It carries out the reaction a reduced flavin + NAD(+) = an oxidized flavin + NADH + 2 H(+). Its function is as follows. Catalyzes the reduction of flavin by NADH. Subsequently, the reduced flavins is transferred to the tetracycline 7-halogenase CtcP. In Kitasatospora aureofaciens (Streptomyces aureofaciens), this protein is Flavin reductase (NADH).